The primary structure comprises 555 residues: Sulfite reductase [ferredoxin] 2 (555 aa).

The interval 1–31 (MTTARPAKARNEGQWALGNREPLNPNEEMKQ) is disordered. A cross-link (3'-(S-cysteinyl)-tyrosine (Tyr-Cys)) is located at residues 69 to 161 (YTQREQGYDG…AVGLRTTEAC (93 aa)). [4Fe-4S] cluster contacts are provided by Cys-417, Cys-423, Cys-463, and Cys-467. Cys-467 provides a ligand contact to siroheme.

Belongs to the nitrite and sulfite reductase 4Fe-4S domain family. In terms of assembly, monomer. Siroheme serves as cofactor. [4Fe-4S] cluster is required as a cofactor.

The catalysed reaction is hydrogen sulfide + 6 oxidized [2Fe-2S]-[ferredoxin] + 3 H2O = sulfite + 6 reduced [2Fe-2S]-[ferredoxin] + 7 H(+). Functionally, catalyzes the reduction of sulfite to sulfide, a step in the biosynthesis of sulfur-containing amino acids and cofactors. This is Sulfite reductase [ferredoxin] 2 (sir2) from Mycolicibacterium paratuberculosis (strain ATCC BAA-968 / K-10) (Mycobacterium paratuberculosis).